A 684-amino-acid chain; its full sequence is Coiled-coil domain-containing protein 62 (684 aa).

Coiled-coil stretches lie at residues Arg-11–Thr-160 and Thr-199–Ala-322. The tract at residues Ser-579–Thr-603 is disordered. The segment covering Ser-594–Thr-603 has biased composition (polar residues). 2 consecutive short sequence motifs (LXXLL motif) follow at residues Leu-634–Leu-638 and Leu-650–Leu-654. Residues Ser-657–Tyr-684 form a disordered region. Positions Glu-659–Ser-669 are enriched in polar residues.

As to quaternary structure, interacts with ESR1 and ESR2 in the presence of estradiol/E2. The interaction with ESR2 recruits CCDC62 to ER target genes, including cyclin-D1/CCND1 AP-1 promoter. Interacts with GOPC. Highly expressed in adult testis. Expressed in both prostate epithelial and stromal cells, with predominant expression in epithelial cells (at protein level). Not detected in prostate by RT-PCR. Overexpressed in various cancers.

Its subcellular location is the cytoplasm. It is found in the nucleus. The protein localises to the cytoplasmic vesicle. It localises to the secretory vesicle. The protein resides in the acrosome. Its function is as follows. Nuclear receptor coactivator that can enhance preferentially estrogen receptors ESR1 and ESR2 transactivation. Also modulates progesterone/PGR, glucocorticoid/NR3C1 and androgen/AR receptors transactivation, although at lower level; little effect on vitamin D receptor/VDR. Required for normal spermiogenesis. It probably plays a role in acrosome formation. The chain is Coiled-coil domain-containing protein 62 (CCDC62) from Homo sapiens (Human).